The primary structure comprises 689 residues: Beta-galactosidase BbgII (689 aa).

Arg-122 and Asn-160 together coordinate substrate. Glu-161 (proton donor) is an active-site residue. The Nucleophile role is filled by Glu-320. Substrate is bound by residues Trp-328 and Glu-368–His-371.

Belongs to the glycosyl hydrolase 42 family.

It catalyses the reaction Hydrolysis of terminal non-reducing beta-D-galactose residues in beta-D-galactosides.. In Bifidobacterium bifidum (strain DSM 20082 / JCM 1254 / BCRC 11844 / KCTC 3440 / E319f (Variant a)), this protein is Beta-galactosidase BbgII.